The chain runs to 693 residues: Alpha-glucosidase (693 aa).

Active-site residues include aspartate 320 and glutamate 323. The active-site Proton donor is the aspartate 416.

It belongs to the glycosyl hydrolase 31 family.

It is found in the cytoplasm. The catalysed reaction is Hydrolysis of terminal, non-reducing (1-&gt;4)-linked alpha-D-glucose residues with release of alpha-D-glucose.. Major soluble alpha-glucosidase. The protein is Alpha-glucosidase (malA) of Saccharolobus solfataricus (strain ATCC 35092 / DSM 1617 / JCM 11322 / P2) (Sulfolobus solfataricus).